The following is a 242-amino-acid chain: Phosphatidylcholine synthase (242 aa).

The Cytoplasmic segment spans residues 1-15 (MKIFNYKRVPYAEMR). The helical transmembrane segment at 16–36 (AFSVHILTASGSFLAFLGVVA) threads the bilayer. Topologically, residues 37 to 41 (AAEHR) are periplasmic. The helical transmembrane segment at 42–62 (FIDMFWWLGLALLVDGIDGPI) threads the bilayer. Residues 63 to 76 (ARKVRVKEVLPNWS) lie on the Cytoplasmic side of the membrane. The helical transmembrane segment at 77–97 (GDTLDNIIDYVTYVLLPAFAL) threads the bilayer. At 98-100 (YQS) the chain is on the periplasmic side. The chain crosses the membrane as a helical span at residues 101–121 (GMIGEPWSFVAAGMIVVSSAI). Residues 122–133 (YYADMGMKTDEY) are Cytoplasmic-facing. A helical membrane pass occupies residues 134–154 (FFSGFPVVWNMIVFTLFVIDA). Residues 155-159 (SATTA) are Periplasmic-facing. Residues 160 to 180 (LTVVIVSVVLTFLPINFLHPV) traverse the membrane as a helical segment. The Cytoplasmic segment spans residues 181–187 (RVKRLRP). The helical transmembrane segment at 188-208 (LNLGVFFLWSALGIFSLLMHF) threads the bilayer. The Periplasmic segment spans residues 209–214 (DTPEWA). Residues 215–235 (LILFIVTGAYLYVIGAVLQFF) traverse the membrane as a helical segment. The Cytoplasmic segment spans residues 236 to 242 (PALGRET).

Belongs to the CDP-alcohol phosphatidyltransferase class-I family. Mn(2+) is required as a cofactor.

The protein localises to the cell inner membrane. The enzyme catalyses a CDP-1,2-diacyl-sn-glycerol + choline = a 1,2-diacyl-sn-glycero-3-phosphocholine + CMP + H(+). Its function is as follows. Condenses choline with CDP-diglyceride to produce phosphatidylcholine and CMP. This is Phosphatidylcholine synthase from Rhizobium johnstonii (strain DSM 114642 / LMG 32736 / 3841) (Rhizobium leguminosarum bv. viciae).